A 319-amino-acid chain; its full sequence is Putative antiporter CaxA (319 aa).

Transmembrane regions (helical) follow at residues 3 to 23, 38 to 58, 81 to 101, 105 to 125, 127 to 147, 175 to 195, 208 to 228, 250 to 270, 275 to 292, and 297 to 317; these read VATI…DRFV, MIIG…MVSA, ILLV…SMTI, FPLL…QSLT, AEGA…VYWG, VWLV…VHGA, LIGL…ASLI, ILAV…AAAA, YVMM…LRLG, and INRV…YLLF.

This sequence belongs to the Ca(2+):cation antiporter (CaCA) (TC 2.A.19) family.

It localises to the cell membrane. Its function is as follows. Confers modest Ca(2+) and Na(+) resistance. This is Putative antiporter CaxA (caxA) from Alkalimonas amylolytica.